A 190-amino-acid chain; its full sequence is Xanthine phosphoribosyltransferase (190 aa).

Leucine 20 and asparagine 27 together coordinate xanthine. 5-phospho-alpha-D-ribose 1-diphosphate is bound at residue 128 to 132 (ANGKA). Lysine 156 contacts xanthine.

Belongs to the purine/pyrimidine phosphoribosyltransferase family. Xpt subfamily. As to quaternary structure, homodimer.

The protein localises to the cytoplasm. The enzyme catalyses XMP + diphosphate = xanthine + 5-phospho-alpha-D-ribose 1-diphosphate. It functions in the pathway purine metabolism; XMP biosynthesis via salvage pathway; XMP from xanthine: step 1/1. In terms of biological role, converts the preformed base xanthine, a product of nucleic acid breakdown, to xanthosine 5'-monophosphate (XMP), so it can be reused for RNA or DNA synthesis. The polypeptide is Xanthine phosphoribosyltransferase (Pseudomonas fluorescens (strain SBW25)).